A 336-amino-acid chain; its full sequence is MNSTPANSTPLPPLQPFTPGSSAATPAPIALTRSKPRRRLSSNVVGVSDRRRLLQMLQNVEEVSPGPDSASEAGESPSIRSQDEAHLEHLSSARICMDEDKELLIHQALPAFENTLLRFVQALSKYDFRQDLAETLMETESQFCEAVDELVEHQQAAQTIAALERVSEGLDDKIRDMIRKLAECRRELRNYQPNNENQSTLSSADLLTYATRIANFTTAPPYFRERPEHSKLPWPIEDEMRKGLLALMEVGKDKTELGELADPEKFAHTAANGVAPNGAAPVANGVAQNHNNGYAMERRLSTGYGSDNDGDTNMNGRSGLAGLDIFDDDDDDDDDD.

Disordered regions lie at residues 1–45 (MNST…SNVV) and 59–85 (NVEE…QDEA). The stretch at 154-192 (QQAAQTIAALERVSEGLDDKIRDMIRKLAECRRELRNYQ) forms a coiled coil. The interval 281 to 336 (PVANGVAQNHNNGYAMERRLSTGYGSDNDGDTNMNGRSGLAGLDIFDDDDDDDDDD) is disordered. The segment covering 325–336 (IFDDDDDDDDDD) has biased composition (acidic residues).

This sequence belongs to the Mediator complex subunit 4 family. In terms of assembly, component of the Mediator complex.

Its subcellular location is the nucleus. Its function is as follows. Component of the Mediator complex, a coactivator involved in the regulated transcription of nearly all RNA polymerase II-dependent genes. Mediator functions as a bridge to convey information from gene-specific regulatory proteins to the basal RNA polymerase II transcription machinery. Mediator is recruited to promoters by direct interactions with regulatory proteins and serves as a scaffold for the assembly of a functional preinitiation complex with RNA polymerase II and the general transcription factors. In Yarrowia lipolytica (strain CLIB 122 / E 150) (Yeast), this protein is Mediator of RNA polymerase II transcription subunit 4 (MED4).